The sequence spans 452 residues: UDP-N-acetylmuramate--L-alanine ligase (452 aa).

121–127 (GTHGKTT) contacts ATP.

This sequence belongs to the MurCDEF family.

It localises to the cytoplasm. It catalyses the reaction UDP-N-acetyl-alpha-D-muramate + L-alanine + ATP = UDP-N-acetyl-alpha-D-muramoyl-L-alanine + ADP + phosphate + H(+). The protein operates within cell wall biogenesis; peptidoglycan biosynthesis. Its function is as follows. Cell wall formation. This chain is UDP-N-acetylmuramate--L-alanine ligase, found in Christiangramia forsetii (strain DSM 17595 / CGMCC 1.15422 / KT0803) (Gramella forsetii).